Reading from the N-terminus, the 1410-residue chain is Endoribonuclease Dicer homolog 2a (1410 aa).

Over residues Met-1–Gly-15 the composition is skewed to gly residues. The interval Met-1–Pro-30 is disordered. One can recognise a Helicase ATP-binding domain in the interval Ala-41–Ile-222. Leu-54–Thr-61 provides a ligand contact to ATP. The DECH box signature appears at Asp-163–His-166. One can recognise a Helicase C-terminal domain in the interval Thr-388 to Arg-561. In terms of domain architecture, Dicer dsRNA-binding fold spans Ser-569 to Glu-655. In terms of domain architecture, PAZ spans Lys-827–Met-942. RNase III domains are found at residues Ser-969–Gly-1124 and Val-1161–Lys-1308. Residues Glu-1200, Asp-1294, and Glu-1297 each coordinate Mg(2+). Positions Asp-1334–Ala-1400 constitute a DRBM domain.

Belongs to the helicase family. Dicer subfamily. As to quaternary structure, may interact with ARGONAUTE1 or PINHEAD through their common PAZ domains. Requires Mg(2+) as cofactor. The cofactor is Mn(2+).

Its subcellular location is the nucleus. In terms of biological role, probably involved in the RNA silencing pathway. May cleave double-stranded RNA to produce short 21-24 nucleotides (nt) RNAs which target the selective destruction of complementary RNAs. This Oryza sativa subsp. japonica (Rice) protein is Endoribonuclease Dicer homolog 2a (DCL2A).